Consider the following 363-residue polypeptide: Dihydroorotate dehydrogenase (quinone) (363 aa).

FMN-binding positions include 67 to 71 (AGLDK) and Thr-91. Lys-71 is a substrate binding site. 116-120 (NRMGF) is a binding site for substrate. FMN-binding residues include Asn-145 and Asn-178. Asn-178 provides a ligand contact to substrate. The Nucleophile role is filled by Ser-181. Asn-183 lines the substrate pocket. Residues Lys-219 and Thr-247 each coordinate FMN. 248–249 (NT) is a binding site for substrate. FMN-binding positions include Gly-268, Gly-297, and 318 to 319 (YT).

This sequence belongs to the dihydroorotate dehydrogenase family. Type 2 subfamily. As to quaternary structure, monomer. Requires FMN as cofactor.

It localises to the cell membrane. The enzyme catalyses (S)-dihydroorotate + a quinone = orotate + a quinol. The protein operates within pyrimidine metabolism; UMP biosynthesis via de novo pathway; orotate from (S)-dihydroorotate (quinone route): step 1/1. Catalyzes the conversion of dihydroorotate to orotate with quinone as electron acceptor. This chain is Dihydroorotate dehydrogenase (quinone), found in Myxococcus xanthus (strain DK1622).